The following is a 337-amino-acid chain: F420-dependent glucose-6-phosphate dehydrogenase (337 aa).

Asp-40 contacts coenzyme F420-(gamma-Glu)n. Residue His-41 is the Proton donor of the active site. Residues Thr-77 and 108–109 (SG) each bind coenzyme F420-(gamma-Glu)n. Residue Glu-110 is the Proton acceptor of the active site. Residues Asn-113, 178-179 (GG), and 181-182 (VV) contribute to the coenzyme F420-(gamma-Glu)n site. Substrate contacts are provided by Thr-196, Lys-199, Lys-260, and Arg-284.

Belongs to the F420-dependent glucose-6-phosphate dehydrogenase family. In terms of assembly, homodimer.

The enzyme catalyses oxidized coenzyme F420-(gamma-L-Glu)(n) + D-glucose 6-phosphate + H(+) = 6-phospho-D-glucono-1,5-lactone + reduced coenzyme F420-(gamma-L-Glu)(n). In terms of biological role, catalyzes the coenzyme F420-dependent oxidation of glucose 6-phosphate (G6P) to 6-phosphogluconolactone. This chain is F420-dependent glucose-6-phosphate dehydrogenase, found in Rhodococcus erythropolis (strain PR4 / NBRC 100887).